The primary structure comprises 236 residues: MNETRINVDPNEIAKFEQLAHRWWDQEGEFKPLHDINPLRLEYIRNHASLAGKRILDVGCGGGILTEELTRLGAKVTGIDLGKAPLSVARLHALEEGLEIDYQQISVERLAETKAGSFDVITNLEMLEHVPYPASVVAACGQLLKPGGKVFFSTLNRTPKAYLFAVIGAEYALRLLPKGTHDYHRFIRPAELETWCRKGGIELQNLTGLHYNPLTQRYRLGKDINVNYLAYGAKKE.

Residues Arg40, Gly59, Asp80, and Leu124 each contribute to the S-adenosyl-L-methionine site.

It belongs to the methyltransferase superfamily. UbiG/COQ3 family.

The catalysed reaction is a 3-demethylubiquinol + S-adenosyl-L-methionine = a ubiquinol + S-adenosyl-L-homocysteine + H(+). The enzyme catalyses a 3-(all-trans-polyprenyl)benzene-1,2-diol + S-adenosyl-L-methionine = a 2-methoxy-6-(all-trans-polyprenyl)phenol + S-adenosyl-L-homocysteine + H(+). The protein operates within cofactor biosynthesis; ubiquinone biosynthesis. O-methyltransferase that catalyzes the 2 O-methylation steps in the ubiquinone biosynthetic pathway. The polypeptide is Ubiquinone biosynthesis O-methyltransferase (Nitrosococcus oceani (strain ATCC 19707 / BCRC 17464 / JCM 30415 / NCIMB 11848 / C-107)).